Reading from the N-terminus, the 219-residue chain is Sugar transporter SWEET1 (219 aa).

The next 7 membrane-spanning stretches (helical) occupy residues 3–23 (FLQL…TTGL), 38–58 (VQFL…YYGL), 63–83 (GTVI…IATY), 98–118 (LLMV…ISPG), 125–145 (LGLT…ADLL), 156–176 (LSFS…LYGL), and 189–209 (PGIF…AVIP). In terms of domain architecture, MtN3/slv 1 spans 5–90 (QLLSCACIIF…ATYCHYTKEK (86 aa)). Positions 124–204 (QLGLTCSVFT…LIRFFLFWWF (81 aa)) constitute a MtN3/slv 2 domain.

This sequence belongs to the SWEET sugar transporter family.

The protein localises to the golgi apparatus membrane. It is found in the cell membrane. In terms of biological role, mediates sugar transport across membranes. This is Sugar transporter SWEET1 (slc50a1) from Danio rerio (Zebrafish).